Consider the following 189-residue polypeptide: Transcription factor FapR (189 aa).

Belongs to the FapR family.

Its function is as follows. Transcriptional factor involved in regulation of membrane lipid biosynthesis by repressing genes involved in fatty acid and phospholipid metabolism. The sequence is that of Transcription factor FapR from Listeria monocytogenes serotype 4a (strain HCC23).